Consider the following 236-residue polypeptide: Zinc finger AN1 domain-containing stress-associated protein 13 (236 aa).

Disordered stretches follow at residues 48-81 and 150-173; these read KEGRSGGGGGSEGQRTDSRLQLPTTSIVDSPGKR and TVPEGIPVDEGAMPPPPPPRAKTK. The span at 66 to 75 shows a compositional bias: polar residues; sequence RLQLPTTSIV. The AN1-type; degenerate zinc-finger motif lies at 170–216; the sequence is AKTKSRCAACGRRVGLMGFECRCGAVFCGAHPLLGQARLWLRLQGRA. Positions 176, 179, 197, and 200 each coordinate Zn(2+).

May be involved in environmental stress response. The polypeptide is Zinc finger AN1 domain-containing stress-associated protein 13 (SAP13) (Oryza sativa subsp. japonica (Rice)).